The sequence spans 252 residues: 2-C-methyl-D-erythritol 4-phosphate cytidylyltransferase (252 aa).

The protein belongs to the IspD/TarI cytidylyltransferase family. IspD subfamily.

The catalysed reaction is 2-C-methyl-D-erythritol 4-phosphate + CTP + H(+) = 4-CDP-2-C-methyl-D-erythritol + diphosphate. The protein operates within isoprenoid biosynthesis; isopentenyl diphosphate biosynthesis via DXP pathway; isopentenyl diphosphate from 1-deoxy-D-xylulose 5-phosphate: step 2/6. Its function is as follows. Catalyzes the formation of 4-diphosphocytidyl-2-C-methyl-D-erythritol from CTP and 2-C-methyl-D-erythritol 4-phosphate (MEP). The chain is 2-C-methyl-D-erythritol 4-phosphate cytidylyltransferase from Chlorobium phaeobacteroides (strain BS1).